A 433-amino-acid chain; its full sequence is MSNRFDSKPKCRCVAKIDDNYENNCQSKYISKCEIPRNICQRKNIDFFYDFRLKYSDADFDYVFGNDGVVTQNFTGLTVNSVPFTQTVPIGNEHPKWLKFYKDAFPLYNDREVIFETEMSGVQVIDGNSIPEKMKPRIRNVDDDLRLASGALNVIDPNTWMVFDFFVTNTAIYAFYERLPFGKTSSTPSNTTSQFGNKSFHDKFTHNGSIHNGSIHNGSIHNGSHCNPNPDVPTDLGNYAAFSNAIWVARRSADDPLSQFSKLAIGIHKGKGLVTWYIDDIPVFTWDRIGYRMHDEYRMVDHGGIEGIVSPDSMRLGFGTFSLFDMNLPNDYDRGYVDPVVVLPDGPHREIARSALIQLDFAANYRETFPDPYTGLERPLADPAITFAYTLGETPDDNRAIKLFGQGAIIKLKYLRVYTRSPNAKPEFSRVNH.

Its subcellular location is the virion. This is an uncharacterized protein from Acanthamoeba polyphaga (Amoeba).